Reading from the N-terminus, the 710-residue chain is Protein-glutamine gamma-glutamyltransferase Z (710 aa).

Residues Cys-279, His-338, and Asp-361 contribute to the active site. The Ca(2+) site is built by Asn-401, Asp-403, Glu-450, and Glu-455.

The protein belongs to the transglutaminase superfamily. Transglutaminase family. Ca(2+) is required as a cofactor. Widely expressed.

The catalysed reaction is L-glutaminyl-[protein] + L-lysyl-[protein] = [protein]-L-lysyl-N(6)-5-L-glutamyl-[protein] + NH4(+). Catalyzes the cross-linking of proteins and the conjugation of polyamines to proteins. This Homo sapiens (Human) protein is Protein-glutamine gamma-glutamyltransferase Z (TGM7).